A 377-amino-acid chain; its full sequence is Dihydroorotate dehydrogenase (quinone) (377 aa).

Residues Ala-78–Lys-82 and Ala-102 contribute to the FMN site. Residue Lys-82 participates in substrate binding. Residue Asn-127 to Gly-130 participates in substrate binding. Residues Asn-159 and Asn-192 each coordinate FMN. Asn-192 serves as a coordination point for substrate. Residue Ser-195 is the Nucleophile of the active site. Asn-197 provides a ligand contact to substrate. Positions 230 and 258 each coordinate FMN. Substrate is bound at residue Asn-259 to Thr-260. FMN contacts are provided by residues Gly-288, Gly-317, and Tyr-338–Thr-339.

This sequence belongs to the dihydroorotate dehydrogenase family. Type 2 subfamily. Monomer. The cofactor is FMN.

Its subcellular location is the cell membrane. It catalyses the reaction (S)-dihydroorotate + a quinone = orotate + a quinol. It functions in the pathway pyrimidine metabolism; UMP biosynthesis via de novo pathway; orotate from (S)-dihydroorotate (quinone route): step 1/1. Catalyzes the conversion of dihydroorotate to orotate with quinone as electron acceptor. This Rippkaea orientalis (strain PCC 8801 / RF-1) (Cyanothece sp. (strain PCC 8801)) protein is Dihydroorotate dehydrogenase (quinone).